The chain runs to 244 residues: 2,3-bisphosphoglycerate-dependent phosphoglycerate mutase (244 aa).

Residues 8 to 15 (RHGESNWN), 21 to 22 (TG), Arg60, 87 to 90 (ERHY), Lys98, 114 to 115 (RR), and 181 to 182 (GN) contribute to the substrate site. The active-site Tele-phosphohistidine intermediate is His9. Glu87 acts as the Proton donor/acceptor in catalysis.

Belongs to the phosphoglycerate mutase family. BPG-dependent PGAM subfamily.

It carries out the reaction (2R)-2-phosphoglycerate = (2R)-3-phosphoglycerate. It participates in carbohydrate degradation; glycolysis; pyruvate from D-glyceraldehyde 3-phosphate: step 3/5. In terms of biological role, catalyzes the interconversion of 2-phosphoglycerate and 3-phosphoglycerate. In Frankia alni (strain DSM 45986 / CECT 9034 / ACN14a), this protein is 2,3-bisphosphoglycerate-dependent phosphoglycerate mutase.